The primary structure comprises 159 residues: MNISIITVGKLKEKYLKQGIAEYTKRLQAYAKIDIIELADEKAPEHLSEQDMKIIKDKEGERILSKINPDAHVIALAIEGKMKTSEELADTIDKLATYGKSKVCFVIGGSLGLSDAVMQRANEKLSFSRMTFPHQLMRLVLVEQVYRAFRIVRGEPYHK.

S-adenosyl-L-methionine contacts are provided by residues Leu76, Gly108, and 127–132 (FSRMTF).

It belongs to the RNA methyltransferase RlmH family. As to quaternary structure, homodimer.

It localises to the cytoplasm. The catalysed reaction is pseudouridine(1915) in 23S rRNA + S-adenosyl-L-methionine = N(3)-methylpseudouridine(1915) in 23S rRNA + S-adenosyl-L-homocysteine + H(+). Specifically methylates the pseudouridine at position 1915 (m3Psi1915) in 23S rRNA. The sequence is that of Ribosomal RNA large subunit methyltransferase H from Bacillus pumilus (strain SAFR-032).